Reading from the N-terminus, the 356-residue chain is Protein-arginine kinase (356 aa).

The Phosphagen kinase C-terminal domain occupies 24–256 (IIISSRVRVA…RQILAQEQAA (233 aa)). ATP is bound by residues 27 to 31 (SSRVR), His-93, Arg-127, 178 to 182 (RASVM), and 209 to 214 (RGLYGE). The RDXXRA motif of the pArg binding pocket involved in allosteric regulation motif lies at 339 to 344 (RDIFRA).

The protein belongs to the ATP:guanido phosphotransferase family.

The catalysed reaction is L-arginyl-[protein] + ATP = N(omega)-phospho-L-arginyl-[protein] + ADP + H(+). With respect to regulation, appears to be allosterically activated by the binding of pArg-containing polypeptides to the pArg-binding pocket localized in the C-terminal domain of McsB. Its function is as follows. Catalyzes the specific phosphorylation of arginine residues in proteins. This Pelotomaculum thermopropionicum (strain DSM 13744 / JCM 10971 / SI) protein is Protein-arginine kinase.